Consider the following 89-residue polypeptide: Small ribosomal subunit protein uS15 (89 aa).

This sequence belongs to the universal ribosomal protein uS15 family. In terms of assembly, part of the 30S ribosomal subunit. Forms a bridge to the 50S subunit in the 70S ribosome, contacting the 23S rRNA.

Functionally, one of the primary rRNA binding proteins, it binds directly to 16S rRNA where it helps nucleate assembly of the platform of the 30S subunit by binding and bridging several RNA helices of the 16S rRNA. Its function is as follows. Forms an intersubunit bridge (bridge B4) with the 23S rRNA of the 50S subunit in the ribosome. The protein is Small ribosomal subunit protein uS15 of Sinorhizobium medicae (strain WSM419) (Ensifer medicae).